The chain runs to 332 residues: uncharacterized protein (332 aa).

Residues 185–205 form a helical membrane-spanning segment; that stretch reads MVYGYSVFNAFFILLALPNVI.

The protein localises to the host membrane. This is an uncharacterized protein from Sulfolobus islandicus filamentous virus (isolate Iceland/Hveragerdi) (SIFV).